We begin with the raw amino-acid sequence, 281 residues long: UPF0162 protein PD_0709 (281 aa).

TPR repeat units lie at residues 193 to 226 (VRIL…VPNQ) and 227 to 260 (PEAL…YPST).

The protein belongs to the UPF0162 family.

This chain is UPF0162 protein PD_0709, found in Xylella fastidiosa (strain Temecula1 / ATCC 700964).